The sequence spans 146 residues: Hemoglobin subunit beta (146 aa).

Val-1 carries the post-translational modification N-acetylvaline. Positions 2-146 (HLTAEEKSAV…VANALAHKYH (145 aa)) constitute a Globin domain. Position 44 is a phosphoserine (Ser-44). An N6-acetyllysine modification is found at Lys-59. Position 63 (His-63) interacts with heme b. N6-acetyllysine is present on Lys-82. Heme b is bound at residue His-92. An S-nitrosocysteine modification is found at Cys-93. Lys-144 carries the post-translational modification N6-acetyllysine.

Belongs to the globin family. In terms of assembly, heterotetramer of two alpha chains and two beta chains. In terms of tissue distribution, red blood cells.

In terms of biological role, involved in oxygen transport from the lung to the various peripheral tissues. The chain is Hemoglobin subunit beta from Tamias merriami (Merriam's chipmunk).